The primary structure comprises 130 residues: Large ribosomal subunit protein bL17 (130 aa).

It belongs to the bacterial ribosomal protein bL17 family. Part of the 50S ribosomal subunit. Contacts protein L32.

The polypeptide is Large ribosomal subunit protein bL17 (Shewanella pealeana (strain ATCC 700345 / ANG-SQ1)).